Here is a 245-residue protein sequence, read N- to C-terminus: Ubiquinone biosynthesis O-methyltransferase (245 aa).

R44, G64, D85, and M129 together coordinate S-adenosyl-L-methionine.

This sequence belongs to the methyltransferase superfamily. UbiG/COQ3 family.

The enzyme catalyses a 3-demethylubiquinol + S-adenosyl-L-methionine = a ubiquinol + S-adenosyl-L-homocysteine + H(+). It catalyses the reaction a 3-(all-trans-polyprenyl)benzene-1,2-diol + S-adenosyl-L-methionine = a 2-methoxy-6-(all-trans-polyprenyl)phenol + S-adenosyl-L-homocysteine + H(+). The protein operates within cofactor biosynthesis; ubiquinone biosynthesis. Functionally, O-methyltransferase that catalyzes the 2 O-methylation steps in the ubiquinone biosynthetic pathway. The protein is Ubiquinone biosynthesis O-methyltransferase of Proteus mirabilis (strain HI4320).